Here is a 1207-residue protein sequence, read N- to C-terminus: DNA-directed RNA polymerase subunit beta' (1207 aa).

4 residues coordinate Zn(2+): cysteine 60, cysteine 62, cysteine 75, and cysteine 78. The Mg(2+) site is built by aspartate 449, aspartate 451, and aspartate 453. Zn(2+) contacts are provided by cysteine 822, cysteine 896, cysteine 903, and cysteine 906.

It belongs to the RNA polymerase beta' chain family. In terms of assembly, the RNAP catalytic core consists of 2 alpha, 1 beta, 1 beta' and 1 omega subunit. When a sigma factor is associated with the core the holoenzyme is formed, which can initiate transcription. It depends on Mg(2+) as a cofactor. Zn(2+) serves as cofactor.

The catalysed reaction is RNA(n) + a ribonucleoside 5'-triphosphate = RNA(n+1) + diphosphate. Functionally, DNA-dependent RNA polymerase catalyzes the transcription of DNA into RNA using the four ribonucleoside triphosphates as substrates. The polypeptide is DNA-directed RNA polymerase subunit beta' (Staphylococcus aureus (strain NCTC 8325 / PS 47)).